Here is a 266-residue protein sequence, read N- to C-terminus: Dickkopf-related protein 1 (266 aa).

Positions 1 to 31 are cleaved as a signal peptide; the sequence is MMALGAAGATRVFVAMVAAALGGHPLLGVSA. O-linked (GalNAc...) serine glycosylation is present at Ser61. 10 disulfide bridges follow: Cys85-Cys97, Cys91-Cys111, Cys114-Cys128, Cys121-Cys133, Cys127-Cys138, Cys189-Cys201, Cys195-Cys210, Cys200-Cys237, Cys220-Cys245, and Cys239-Cys263. Residues 85–138 are DKK-type Cys-1; it reads CAEDEECGTDEYCASPTRGGDAGVQICLACRKRRKRCMRHAMCCPGNYCKNGIC. A DKK-type Cys-2 region spans residues 189 to 263; that stretch reads CLRSSDCASG…ASNSSRLHTC (75 aa). N-linked (GlcNAc...) asparagine glycosylation is present at Asn256.

The protein belongs to the dickkopf family. Interacts with LRP6. Interacts (via the C-terminal Cys-rich domain) with LRP5 (via beta-propeller regions 3 and 4); the interaction, enhanced by MESD and or KREMEN, antagonizes Wnt-mediated signaling. Forms a ternary complex with LRP6 and KREM1. Interacts with KREM1. As to expression, placenta.

The protein resides in the secreted. Functionally, antagonizes canonical Wnt signaling by inhibiting LRP5/6 interaction with Wnt and by forming a ternary complex with the transmembrane protein KREMEN that promotes internalization of LRP5/6. DKKs play an important role in vertebrate development, where they locally inhibit Wnt regulated processes such as antero-posterior axial patterning, limb development, somitogenesis and eye formation. In the adult, Dkks are implicated in bone formation and bone disease, cancer and Alzheimer disease. Inhibits the pro-apoptotic function of KREMEN1 in a Wnt-independent manner, and has anti-apoptotic activity. In Homo sapiens (Human), this protein is Dickkopf-related protein 1 (DKK1).